Here is a 532-residue protein sequence, read N- to C-terminus: Nucleobase-ascorbate transporter 6 (532 aa).

The interval 1-24 (MAGGGAPAPKADEPQPHPPKDQLP) is disordered. Residues 10–20 (KADEPQPHPPK) are compositionally biased toward basic and acidic residues. 12 helical membrane-spanning segments follow: residues 39–59 (AILL…LIPT), 75–95 (VIQT…LFGT), 97–117 (LPAV…IILS), 137–157 (TQGA…SGLW), 163–185 (FLSP…EFGF), 192–212 (IEIG…LPHV), 223–243 (FAVI…TVGG), 289–309 (FAMM…FVAV), 361–381 (VGSR…SILG), 392–414 (APII…LSFL), 426–446 (FILG…NEYT), and 463–483 (DMVN…AFFL).

Belongs to the nucleobase:cation symporter-2 (NCS2) (TC 2.A.40) family. As to expression, expressed in the apical region of cotyledons 4 days after imbibition (DAI). Expressed in the whole vasculature at 12 DAI. Expressed in the root central cylinder and lateral root primordia. Expressed in the vasculature of sepals, filaments, carpels and developing siliques.

The protein localises to the membrane. The sequence is that of Nucleobase-ascorbate transporter 6 (NAT6) from Arabidopsis thaliana (Mouse-ear cress).